The chain runs to 238 residues: Ribonuclease Rh (238 aa).

Positions 1 to 16 (MKAVLALATLIGSTLA) are cleaved as a signal peptide. Cystine bridges form between cysteine 19-cysteine 36, cysteine 26-cysteine 69, cysteine 35-cysteine 136, cysteine 79-cysteine 128, and cysteine 198-cysteine 229. Residues histidine 62, glutamate 121, and histidine 125 contribute to the active site.

The protein belongs to the RNase T2 family.

The enzyme catalyses a ribonucleotidyl-ribonucleotide-RNA + H2O = a 3'-end 3'-phospho-ribonucleotide-RNA + a 5'-end dephospho-ribonucleoside-RNA + H(+). Functionally, this is a base non-specific ribonuclease. The polypeptide is Ribonuclease Rh (Rhizopus niveus).